Consider the following 152-residue polypeptide: Transcriptional regulator MraZ (152 aa).

2 SpoVT-AbrB domains span residues 5–52 and 81–124; these read ANAI…PLPE and ATEG…DHSV.

The protein belongs to the MraZ family. In terms of assembly, forms oligomers.

The protein resides in the cytoplasm. It localises to the nucleoid. This chain is Transcriptional regulator MraZ, found in Pseudoalteromonas atlantica (strain T6c / ATCC BAA-1087).